Reading from the N-terminus, the 155-residue chain is Large ribosomal subunit protein uL22c (155 aa).

This sequence belongs to the universal ribosomal protein uL22 family. Part of the 50S ribosomal subunit.

The protein localises to the plastid. It localises to the chloroplast. In terms of biological role, this protein binds specifically to 23S rRNA. Functionally, the globular domain of the protein is located near the polypeptide exit tunnel on the outside of the subunit, while an extended beta-hairpin is found that lines the wall of the exit tunnel in the center of the 70S ribosome. This Coffea arabica (Arabian coffee) protein is Large ribosomal subunit protein uL22c (rpl22).